A 1121-amino-acid chain; its full sequence is uncharacterized protein (1121 aa).

Positions 179-198 (GPGECQSVHNQSSGSGSNSY) are disordered. Residues N188, N325, N351, N449, N561, and N615 are each glycosylated (N-linked (GlcNAc...) asparagine; by host). 2 disordered regions span residues 649-684 (KRIH…RIHN) and 701-734 (STRQ…TDSD). The segment covering 701-715 (STRQDASGGSSSGTK) has biased composition (polar residues). Residues N838, N911, N914, and N980 are each glycosylated (N-linked (GlcNAc...) asparagine; by host).

Belongs to the herpesviridae US22 family.

This is an uncharacterized protein from Homo sapiens (Human).